A 283-amino-acid chain; its full sequence is ATP phosphoribosyltransferase (283 aa).

This sequence belongs to the ATP phosphoribosyltransferase family. Long subfamily. Mg(2+) serves as cofactor.

It localises to the cytoplasm. The enzyme catalyses 1-(5-phospho-beta-D-ribosyl)-ATP + diphosphate = 5-phospho-alpha-D-ribose 1-diphosphate + ATP. The protein operates within amino-acid biosynthesis; L-histidine biosynthesis; L-histidine from 5-phospho-alpha-D-ribose 1-diphosphate: step 1/9. With respect to regulation, feedback inhibited by histidine. Catalyzes the condensation of ATP and 5-phosphoribose 1-diphosphate to form N'-(5'-phosphoribosyl)-ATP (PR-ATP). Has a crucial role in the pathway because the rate of histidine biosynthesis seems to be controlled primarily by regulation of HisG enzymatic activity. This is ATP phosphoribosyltransferase from Salinibacter ruber (strain DSM 13855 / M31).